The sequence spans 264 residues: S-adenosylmethionine decarboxylase proenzyme (264 aa).

Catalysis depends on serine 114, which acts as the Schiff-base intermediate with substrate; via pyruvic acid. Serine 114 is subject to Pyruvic acid (Ser); by autocatalysis. Residue histidine 119 is the Proton acceptor; for processing activity of the active site. Cysteine 142 functions as the Proton donor; for catalytic activity in the catalytic mechanism.

This sequence belongs to the prokaryotic AdoMetDC family. Type 2 subfamily. In terms of assembly, heterooctamer of four alpha and four beta chains arranged as a tetramer of alpha/beta heterodimers. Requires pyruvate as cofactor. Post-translationally, is synthesized initially as an inactive proenzyme. Formation of the active enzyme involves a self-maturation process in which the active site pyruvoyl group is generated from an internal serine residue via an autocatalytic post-translational modification. Two non-identical subunits are generated from the proenzyme in this reaction, and the pyruvate is formed at the N-terminus of the alpha chain, which is derived from the carboxyl end of the proenzyme. The post-translation cleavage follows an unusual pathway, termed non-hydrolytic serinolysis, in which the side chain hydroxyl group of the serine supplies its oxygen atom to form the C-terminus of the beta chain, while the remainder of the serine residue undergoes an oxidative deamination to produce ammonia and the pyruvoyl group blocking the N-terminus of the alpha chain.

It carries out the reaction S-adenosyl-L-methionine + H(+) = S-adenosyl 3-(methylsulfanyl)propylamine + CO2. The protein operates within amine and polyamine biosynthesis; S-adenosylmethioninamine biosynthesis; S-adenosylmethioninamine from S-adenosyl-L-methionine: step 1/1. In terms of biological role, catalyzes the decarboxylation of S-adenosylmethionine to S-adenosylmethioninamine (dcAdoMet), the propylamine donor required for the synthesis of the polyamines spermine and spermidine from the diamine putrescine. The sequence is that of S-adenosylmethionine decarboxylase proenzyme from Chromohalobacter salexigens (strain ATCC BAA-138 / DSM 3043 / CIP 106854 / NCIMB 13768 / 1H11).